Reading from the N-terminus, the 376-residue chain is UDP-N-acetylglucosamine--N-acetylmuramyl-(pentapeptide) pyrophosphoryl-undecaprenol N-acetylglucosamine transferase (376 aa).

Residues 11–13 (TGG), Asn-117, Arg-160, Ser-208, and Gln-310 contribute to the UDP-N-acetyl-alpha-D-glucosamine site.

It belongs to the glycosyltransferase 28 family. MurG subfamily.

It is found in the cell inner membrane. It carries out the reaction di-trans,octa-cis-undecaprenyl diphospho-N-acetyl-alpha-D-muramoyl-L-alanyl-D-glutamyl-meso-2,6-diaminopimeloyl-D-alanyl-D-alanine + UDP-N-acetyl-alpha-D-glucosamine = di-trans,octa-cis-undecaprenyl diphospho-[N-acetyl-alpha-D-glucosaminyl-(1-&gt;4)]-N-acetyl-alpha-D-muramoyl-L-alanyl-D-glutamyl-meso-2,6-diaminopimeloyl-D-alanyl-D-alanine + UDP + H(+). The protein operates within cell wall biogenesis; peptidoglycan biosynthesis. In terms of biological role, cell wall formation. Catalyzes the transfer of a GlcNAc subunit on undecaprenyl-pyrophosphoryl-MurNAc-pentapeptide (lipid intermediate I) to form undecaprenyl-pyrophosphoryl-MurNAc-(pentapeptide)GlcNAc (lipid intermediate II). The sequence is that of UDP-N-acetylglucosamine--N-acetylmuramyl-(pentapeptide) pyrophosphoryl-undecaprenol N-acetylglucosamine transferase from Rickettsia massiliae (strain Mtu5).